Here is a 599-residue protein sequence, read N- to C-terminus: MRSHYCGGINESHIDQEVTLCGWVHRRRDHGGVIFLDLRDRDGMSQVVVDPDTPESFALAEKVRSEFVIKVTGRVRRRPAGTENNNMPTGQVELLGKELVILNAAATPPFPLDEHVDVGEDVRLRYRFVDLRRPEMINRLRFRSRVTSYIRNFLDSRGFMDVETPILTRATPEGARDYLVPSRTHEGSFFALPQSPQLFKQLLMVSGVDRYYQIAKCFRDEDLRADRQPEFTQVDIEASFIDEETLMGLNEEMIRSLFKDVLDVELPEFPRMPYSEAMQRYGSDKPDLRIPLELQDVGDLVESVDFKVFAGPAKDPKGRVAALRVPKGAELTRKQIDDYTRFVGIYGAKGLAYIKVNELTKGAEGLQSPIVKFLGDDVALAIMERVGAEDGDIVFFGADKATVVNEALGALRIKVGHDLNMLTCEWAPMWVVDFPMFEELPDGNLTAIHHPFTAPSCSPEDLAADPANALSRAYDMVLNGTELGGGSIRIHDEKMQEAVFRILGIGEEEARAKFGFLLDALKFGCPPHGGLAFGLDRLVMLMTGSSSIRDVIAFPKTQSATCLMTQAPGEVDEKQLKELHIRLRRSAKAVEGNKAENKE.

E173 is a binding site for L-aspartate. An aspartate region spans residues 197 to 200 (QLFK). R219 serves as a coordination point for L-aspartate. Residues 219–221 (RDE) and Q228 contribute to the ATP site. L-aspartate is bound at residue H449. E482 contacts ATP. R489 contacts L-aspartate. 534 to 537 (GLDR) contacts ATP.

The protein belongs to the class-II aminoacyl-tRNA synthetase family. Type 1 subfamily. Homodimer.

The protein localises to the cytoplasm. The enzyme catalyses tRNA(Asx) + L-aspartate + ATP = L-aspartyl-tRNA(Asx) + AMP + diphosphate. In terms of biological role, aspartyl-tRNA synthetase with relaxed tRNA specificity since it is able to aspartylate not only its cognate tRNA(Asp) but also tRNA(Asn). Reaction proceeds in two steps: L-aspartate is first activated by ATP to form Asp-AMP and then transferred to the acceptor end of tRNA(Asp/Asn). The chain is Aspartate--tRNA(Asp/Asn) ligase from Marinobacter nauticus (strain ATCC 700491 / DSM 11845 / VT8) (Marinobacter aquaeolei).